Consider the following 496-residue polypeptide: UDP-glycosyltransferase 73C2 (496 aa).

UDP-alpha-D-glucose is bound by residues Ser297, 357–359, 374–382, and 396–399; these read SPQ, HCGWNSTLE, and FGDQ.

This sequence belongs to the UDP-glycosyltransferase family.

The sequence is that of UDP-glycosyltransferase 73C2 (UGT73C2) from Arabidopsis thaliana (Mouse-ear cress).